The chain runs to 420 residues: Methionine aminopeptidase 2 (420 aa).

Residues M1–K48 are disordered. Position 172 (H172) interacts with substrate. D192, D203, and H272 together coordinate a divalent metal cation. Residue H280 participates in substrate binding. Residues E305 and E401 each contribute to the a divalent metal cation site.

Belongs to the peptidase M24A family. Methionine aminopeptidase eukaryotic type 2 subfamily. Requires Co(2+) as cofactor. It depends on Zn(2+) as a cofactor. Mn(2+) serves as cofactor. The cofactor is Fe(2+).

It is found in the cytoplasm. The enzyme catalyses Release of N-terminal amino acids, preferentially methionine, from peptides and arylamides.. In terms of biological role, cotranslationally removes the N-terminal methionine from nascent proteins. The N-terminal methionine is often cleaved when the second residue in the primary sequence is small and uncharged (Met-Ala-, Cys, Gly, Pro, Ser, Thr, or Val). The protein is Methionine aminopeptidase 2 of Lachancea thermotolerans (strain ATCC 56472 / CBS 6340 / NRRL Y-8284) (Yeast).